An 82-amino-acid chain; its full sequence is uncharacterized protein (82 aa).

The tract at residues 22–82 (LRRSRSSRNG…WPPPCAFTPG (61 aa)) is disordered. The span at 47-58 (HRGEPGHPRMEE) shows a compositional bias: basic and acidic residues. A compositionally biased stretch (pro residues) spans 73–82 (WPPPCAFTPG).

This is an uncharacterized protein from Homo sapiens (Human).